Consider the following 435-residue polypeptide: Homoserine dehydrogenase (435 aa).

NADPH-binding residues include Thr13, Val14, and Lys104. Val14 lines the NAD(+) pocket. NADP(+) contacts are provided by Val14 and Lys104. Glu128, Val131, Gly133, and Ile135 together coordinate Na(+). NADP(+) contacts are provided by Gly186 and Glu189. L-homoserine-binding residues include Glu189 and Asp200. Lys204 functions as the Proton donor in the catalytic mechanism. Residue Gly301 participates in NADPH binding. NAD(+) is bound at residue Gly301. NADP(+) is bound at residue Gly301. The 76-residue stretch at 354 to 429 (YLRVQAKDEP…CVEKPITMIR (76 aa)) folds into the ACT domain.

The protein belongs to the homoserine dehydrogenase family. Homotetramer. A metal cation is required as a cofactor.

It carries out the reaction L-homoserine + NAD(+) = L-aspartate 4-semialdehyde + NADH + H(+). It participates in amino-acid biosynthesis; L-methionine biosynthesis via de novo pathway; L-homoserine from L-aspartate: step 3/3. It functions in the pathway amino-acid biosynthesis; L-threonine biosynthesis; L-threonine from L-aspartate: step 3/5. Its activity is regulated as follows. Neither NaCl nor KCl increase the activity. L-threonine and L-serine do not markedly inhibit the oxidation activity. Catalyzes the conversion of L-aspartate-beta-semialdehyde (L-Asa) to L-homoserine (L-Hse), the third step in the biosynthesis of threonine and methionine from aspartate. Is highly specific for NAD(+), and displays an approximate 479-fold (kcat/Km) preference for NAD(+) over NADP(+). This chain is Homoserine dehydrogenase, found in Neisseria gonorrhoeae (strain ATCC 700825 / FA 1090).